The chain runs to 579 residues: Pre-mRNA-processing protein 45 (579 aa).

4 disordered regions span residues 1 to 64, 218 to 254, 343 to 414, and 521 to 579; these read MTSV…GWRP, QQDP…LTAE, QKAR…TERR, and AAEA…VDDD. Residues 234–245 are compositionally biased toward pro residues; that stretch reads RGPPSPPPPIMH. Residues 343-359 are compositionally biased toward basic and acidic residues; that stretch reads QKAREERAASNRRDSRA. Low complexity predominate over residues 366 to 379; sequence ASRSPSAYSRSATP. Basic and acidic residues-rich tracts occupy residues 386–414, 521–538, and 563–579; these read ARER…TERR, AAEA…KDTT, and EVER…VDDD.

This sequence belongs to the SNW family. In terms of assembly, associated with the spliceosome.

Its subcellular location is the nucleus. In terms of biological role, involved in pre-mRNA splicing. This Aspergillus fumigatus (strain ATCC MYA-4609 / CBS 101355 / FGSC A1100 / Af293) (Neosartorya fumigata) protein is Pre-mRNA-processing protein 45 (prp45).